A 275-amino-acid polypeptide reads, in one-letter code: Bis(5'-nucleosyl)-tetraphosphatase, symmetrical (275 aa).

Belongs to the Ap4A hydrolase family.

It carries out the reaction P(1),P(4)-bis(5'-adenosyl) tetraphosphate + H2O = 2 ADP + 2 H(+). Hydrolyzes diadenosine 5',5'''-P1,P4-tetraphosphate to yield ADP. The polypeptide is Bis(5'-nucleosyl)-tetraphosphatase, symmetrical (Actinobacillus succinogenes (strain ATCC 55618 / DSM 22257 / CCUG 43843 / 130Z)).